A 299-amino-acid polypeptide reads, in one-letter code: ATP phosphoribosyltransferase (299 aa).

This sequence belongs to the ATP phosphoribosyltransferase family. Long subfamily. In terms of assembly, equilibrium between an active dimeric form, an inactive hexameric form and higher aggregates. Interconversion between the various forms is largely reversible and is influenced by the natural substrates and inhibitors of the enzyme. It depends on Mg(2+) as a cofactor.

The protein localises to the cytoplasm. The enzyme catalyses 1-(5-phospho-beta-D-ribosyl)-ATP + diphosphate = 5-phospho-alpha-D-ribose 1-diphosphate + ATP. The protein operates within amino-acid biosynthesis; L-histidine biosynthesis; L-histidine from 5-phospho-alpha-D-ribose 1-diphosphate: step 1/9. With respect to regulation, feedback inhibited by histidine. Functionally, catalyzes the condensation of ATP and 5-phosphoribose 1-diphosphate to form N'-(5'-phosphoribosyl)-ATP (PR-ATP). Has a crucial role in the pathway because the rate of histidine biosynthesis seems to be controlled primarily by regulation of HisG enzymatic activity. The protein is ATP phosphoribosyltransferase of Blochmanniella floridana.